We begin with the raw amino-acid sequence, 401 residues long: Glutamyl-tRNA reductase (401 aa).

Residues 45-48, S101, 106-108, and Q112 each bind substrate; these read TCNR and EDQ. Catalysis depends on C46, which acts as the Nucleophile. NADP(+) is bound at residue 177–182; the sequence is GYGDVG.

Belongs to the glutamyl-tRNA reductase family. Homodimer.

It carries out the reaction (S)-4-amino-5-oxopentanoate + tRNA(Glu) + NADP(+) = L-glutamyl-tRNA(Glu) + NADPH + H(+). It participates in porphyrin-containing compound metabolism; protoporphyrin-IX biosynthesis; 5-aminolevulinate from L-glutamyl-tRNA(Glu): step 1/2. In terms of biological role, catalyzes the NADPH-dependent reduction of glutamyl-tRNA(Glu) to glutamate 1-semialdehyde (GSA). The chain is Glutamyl-tRNA reductase from Clostridium botulinum (strain Alaska E43 / Type E3).